The primary structure comprises 397 residues: Putative teichuronic acid biosynthesis glycosyltransferase TuaH (397 aa).

This sequence belongs to the glycosyltransferase group 1 family.

It functions in the pathway cell wall biogenesis; teichuronic acid biosynthesis. In Bacillus subtilis (strain 168), this protein is Putative teichuronic acid biosynthesis glycosyltransferase TuaH (tuaH).